The sequence spans 386 residues: Chaperone protein DnaJ (386 aa).

The J domain occupies 3-68; that stretch reads DYYEILEVAR…KKRQVYDRYG (66 aa). A CR-type zinc finger spans residues 146-224; the sequence is GVDKELVISN…CKGQGAVKEK (79 aa). Zn(2+) is bound by residues Cys159, Cys162, Cys176, Cys179, Cys198, Cys201, Cys212, and Cys215. 4 CXXCXGXG motif repeats span residues 159–166, 176–183, 198–205, and 212–219; these read CNVCNGKG, CSECKGRG, CPKCHGEG, and CKNCKGQG.

This sequence belongs to the DnaJ family. Homodimer. Zn(2+) is required as a cofactor.

The protein localises to the cytoplasm. Participates actively in the response to hyperosmotic and heat shock by preventing the aggregation of stress-denatured proteins and by disaggregating proteins, also in an autonomous, DnaK-independent fashion. Unfolded proteins bind initially to DnaJ; upon interaction with the DnaJ-bound protein, DnaK hydrolyzes its bound ATP, resulting in the formation of a stable complex. GrpE releases ADP from DnaK; ATP binding to DnaK triggers the release of the substrate protein, thus completing the reaction cycle. Several rounds of ATP-dependent interactions between DnaJ, DnaK and GrpE are required for fully efficient folding. Also involved, together with DnaK and GrpE, in the DNA replication of plasmids through activation of initiation proteins. The sequence is that of Chaperone protein DnaJ from Protochlamydia amoebophila (strain UWE25).